Consider the following 273-residue polypeptide: uncharacterized protein (273 aa).

This is an uncharacterized protein from Acanthamoeba polyphaga (Amoeba).